Consider the following 225-residue polypeptide: Small ribosomal subunit protein uS3 (225 aa).

Residues 38-106 (IRRFLQKKFK…PIGMNIIEVK (69 aa)) enclose the KH type-2 domain.

The protein belongs to the universal ribosomal protein uS3 family. As to quaternary structure, part of the 30S ribosomal subunit. Forms a tight complex with proteins S10 and S14.

Its function is as follows. Binds the lower part of the 30S subunit head. Binds mRNA in the 70S ribosome, positioning it for translation. In Leptospira biflexa serovar Patoc (strain Patoc 1 / Ames), this protein is Small ribosomal subunit protein uS3.